A 2353-amino-acid polypeptide reads, in one-letter code: Nonribosomal peptide synthetase 7 (2353 aa).

Positions 305-684 (TFSALNTRAN…AIEEVEDSAV (380 aa)) are adenylation 1. One can recognise a Carrier 1 domain in the interval 776-853 (RDLTDSEKVV…QVAAAVQPQP (78 aa)). Ser-813 is subject to O-(pantetheine 4'-phosphoryl)serine. The condensation 1 stretch occupies residues 885–1147 (EDAFPVTPFQ…LMVAPLRVKV (263 aa)). The tract at residues 1338-1725 (TYAGLAIKMN…QTNVFRQCAV (388 aa)) is adenylation 2. The Carrier 2 domain occupies 1826 to 1902 (EICSEAEREL…EQAALMVQGQ (77 aa)). The residue at position 1863 (Ser-1863) is an O-(pantetheine 4'-phosphoryl)serine. The condensation 2 stretch occupies residues 1939 to 2214 (EDIYPCSPGQ…NGNCANFLPY (276 aa)).

This sequence belongs to the NRP synthetase family.

Nonribosomal peptide synthesis (NRPS) is a key mechanism responsible for the biosynthesis of bioactive metabolites which are potentially contributing to organismal virulence. This Aspergillus fumigatus (strain ATCC MYA-4609 / CBS 101355 / FGSC A1100 / Af293) (Neosartorya fumigata) protein is Nonribosomal peptide synthetase 7 (NRPS7).